The following is a 121-amino-acid chain: DNA-directed RNA polymerase subunit Rpo8 (121 aa).

It belongs to the archaeal Rpo8 RNA polymerase subunit family. As to quaternary structure, part of the 13-subunit RNA polymerase complex. In terms of processing, this subunit is phosphorylated.

The protein localises to the cytoplasm. The catalysed reaction is RNA(n) + a ribonucleoside 5'-triphosphate = RNA(n+1) + diphosphate. DNA-dependent RNA polymerase (RNAP) catalyzes the transcription of DNA into RNA using the four ribonucleoside triphosphates as substrates. This Sulfolobus acidocaldarius (strain ATCC 33909 / DSM 639 / JCM 8929 / NBRC 15157 / NCIMB 11770) protein is DNA-directed RNA polymerase subunit Rpo8.